The following is a 256-amino-acid chain: Thiazole synthase (256 aa).

Lysine 95 acts as the Schiff-base intermediate with DXP in catalysis. Residues glycine 156, 182–183 (AG), and 204–205 (NT) each bind 1-deoxy-D-xylulose 5-phosphate.

It belongs to the ThiG family. As to quaternary structure, homotetramer. Forms heterodimers with either ThiH or ThiS.

It is found in the cytoplasm. It catalyses the reaction [ThiS sulfur-carrier protein]-C-terminal-Gly-aminoethanethioate + 2-iminoacetate + 1-deoxy-D-xylulose 5-phosphate = [ThiS sulfur-carrier protein]-C-terminal Gly-Gly + 2-[(2R,5Z)-2-carboxy-4-methylthiazol-5(2H)-ylidene]ethyl phosphate + 2 H2O + H(+). It functions in the pathway cofactor biosynthesis; thiamine diphosphate biosynthesis. Catalyzes the rearrangement of 1-deoxy-D-xylulose 5-phosphate (DXP) to produce the thiazole phosphate moiety of thiamine. Sulfur is provided by the thiocarboxylate moiety of the carrier protein ThiS. In vitro, sulfur can be provided by H(2)S. The sequence is that of Thiazole synthase from Vibrio cholerae serotype O1 (strain ATCC 39541 / Classical Ogawa 395 / O395).